Here is a 376-residue protein sequence, read N- to C-terminus: Growth/differentiation factor 8 (376 aa).

The first 24 residues, 1 to 24 (MMQKLQMYVYIYLFMLIAAGPVDL), serve as a signal peptide directing secretion. Positions 25-267 (NEGSEREENV…VTDTPKRSRR (243 aa)) are excised as a propeptide. Residue Asn-72 is glycosylated (N-linked (GlcNAc...) asparagine). 4 cysteine pairs are disulfide-bonded: Cys-273-Cys-283, Cys-282-Cys-341, Cys-310-Cys-373, and Cys-314-Cys-375.

The protein belongs to the TGF-beta family. In terms of assembly, homodimer; disulfide-linked. Interacts with WFIKKN2, leading to inhibit its activity. Interacts with FSTL3. In terms of processing, synthesized as large precursor molecule that undergoes proteolytic cleavage to generate an N-terminal propeptide and a disulfide linked C-terminal dimer, which is the biologically active molecule. The circulating form consists of a latent complex of the C-terminal dimer and other proteins, including its propeptide, which maintain the C-terminal dimer in a latent, inactive state. Ligand activation requires additional cleavage of the prodomain by a tolloid-like metalloproteinase. Expressed specifically in developing and adult skeletal muscle. Weak expression in adipose tissue.

It is found in the secreted. Its function is as follows. Acts specifically as a negative regulator of skeletal muscle growth. The polypeptide is Growth/differentiation factor 8 (Mstn) (Mus musculus (Mouse)).